The sequence spans 526 residues: Bifunctional purine biosynthesis protein PurH (526 aa).

The MGS-like domain occupies Met-1 to Thr-147.

The protein belongs to the PurH family.

The enzyme catalyses (6R)-10-formyltetrahydrofolate + 5-amino-1-(5-phospho-beta-D-ribosyl)imidazole-4-carboxamide = 5-formamido-1-(5-phospho-D-ribosyl)imidazole-4-carboxamide + (6S)-5,6,7,8-tetrahydrofolate. It carries out the reaction IMP + H2O = 5-formamido-1-(5-phospho-D-ribosyl)imidazole-4-carboxamide. It functions in the pathway purine metabolism; IMP biosynthesis via de novo pathway; 5-formamido-1-(5-phospho-D-ribosyl)imidazole-4-carboxamide from 5-amino-1-(5-phospho-D-ribosyl)imidazole-4-carboxamide (10-formyl THF route): step 1/1. It participates in purine metabolism; IMP biosynthesis via de novo pathway; IMP from 5-formamido-1-(5-phospho-D-ribosyl)imidazole-4-carboxamide: step 1/1. The sequence is that of Bifunctional purine biosynthesis protein PurH from Neisseria meningitidis serogroup C / serotype 2a (strain ATCC 700532 / DSM 15464 / FAM18).